The chain runs to 302 residues: MAANYWASTQRKHWLFTRERLAEIRESFKEKDKASHTHFPLPDQRLLNIYFNQQLIKLGKRMSTRQQALATAQVYIKRYYTKNEIRNTNPYLVLTTAFYLACKMEECPQHIRFVVSEARALWPEFIVPDVSKVGECEFSLISEMQAQLIVHHPYRTLSELQPELSLTSDEVALAWSVINDHYLTDLSLLYPPHIIAVMAIIVAVVFKPSSQTAFHGSAAPIAGAMRDGGMNILAALSDKGGAGPPPRIQKLIAWLAESEVDIKAVIESTQELVSLYEVWEQYSEKNCKELLGRMIRSKSLDK.

Positions 53 to 142 constitute a Cyclin N-terminal domain; the sequence is QQLIKLGKRM…VGECEFSLIS (90 aa).

The protein belongs to the cyclin family. Cyclin C subfamily. Component of the srb8-11 complex, a regulatory module of the Mediator complex.

The protein localises to the nucleus. Its function is as follows. Component of the srb8-11 complex. The srb8-11 complex is a regulatory module of the Mediator complex which is itself involved in regulation of basal and activated RNA polymerase II-dependent transcription. The srb8-11 complex may be involved in the transcriptional repression of a subset of genes regulated by Mediator. It may inhibit the association of the Mediator complex with RNA polymerase II to form the holoenzyme complex. The srb8-11 complex phosphorylates the C-terminal domain (CTD) of the largest subunit of RNA polymerase II. The protein is RNA polymerase II holoenzyme cyclin-like subunit (ssn8) of Emericella nidulans (strain FGSC A4 / ATCC 38163 / CBS 112.46 / NRRL 194 / M139) (Aspergillus nidulans).